A 636-amino-acid chain; its full sequence is Polyadenylate-binding protein 1 (636 aa).

M1 is subject to N-acetylmethionine. RRM domains lie at 11–89 (ASLY…WSQR), 99–175 (GNIF…RFKS), 191–268 (TNVY…RAQK), and 294–370 (VNLY…LAQR). The interval 166 to 289 (RKVFVGRFKS…FEQMKQDRIT (124 aa)) is UNR-binding. An N6-methyllysine modification is found at K299. A Phosphoserine modification is found at S315. A Phosphothreonine modification is found at T319. Omega-N-methylarginine occurs at positions 385, 419, 432, and 436. Omega-N-methylated arginine; by CARM1 is present on residues R455 and R460. Residues R475 and R481 each carry the omega-N-methylarginine modification. R493 carries the asymmetric dimethylarginine; alternate modification. A Dimethylated arginine; alternate modification is found at R493. R493 carries the omega-N-methylarginine; alternate modification. R506 bears the Omega-N-methylarginine mark. N6-acetyllysine is present on K512. R518 carries the omega-N-methylarginine modification. The PABC domain maps to 542-619 (QEPLTASMLA…AVAVLQAHQA (78 aa)).

Belongs to the polyadenylate-binding protein type-1 family. May form homodimers. Component of a multisubunit autoregulatory ribonucleoprotein complex (ARC), at least composed of IGF2BP1, PABPC1 and CSDE1. Directly interacts with IGF2BP1. Part of a complex associated with the FOS mCRD domain and consisting of HNRPD, SYNCRIP, PAIP1 and CSDE1/UNR. Interacts with PAIP1 and PAIP2 (via the PABPC1-interacting motifs PAM1 and PAM2). Interacts with PAIP1 with a 1:1 stoichiometry and with PAIP2 with a 1:2 stoichiometry. The interaction with CSDE1 is direct and RNA-independent. Found in a mRNP complex with YBX2. Interacts with TENT2/GLD2. Identified in the spliceosome C complex. Identified in a mRNP complex, at least composed of DHX9, DDX3X, ELAVL1, HNRNPU, IGF2BP1, ILF3, PABPC1, PCBP2, PTBP2, STAU1, STAU2, SYNCRIP and YBX1. The interaction with DDX3X is direct and RNA-independent. This interaction increases in stressed cells and decreases during cell recovery. Identified in a IGF2BP1-dependent mRNP granule complex containing untranslated mRNAs. Interacts with NXF1/TAP. Interacts with PIWIL1. Interacts with AGO1, AGO2, GSPT1 and GSPT2. Interacts with LARP4B. Interacts (via the second and third RRM domains and the C-terminus) with PAIP2B (via central acidic portion and C-terminus). Forms a complex with LARP1 and SHFL. Interacts with LARP4. Interacts with ZFC3H1 in a RNase-sensitive manner. Interacts with TRIM71 (via NHL repeats) in an RNA-dependent manner. Interacts with TENT5C; the interaction has no effect on TENT5C poly(A) polymerase function. Interacts with G3BP1 and G3BP2. Interacts with ENDOV; the interaction is RNA-dependent and stimulates ENDOV activity. Interacts with UPF1; the interaction is RNA-dependent. Interacts with IGF2BP2 and IGF2BP3. May interact with SETX. Interacts with RBM46. Interacts with PAN3 isoform 1/Pan3L and isoform 3/Pan3S (via N-terminus); interaction with isoform 1 is less efficient than with isoform 3. Post-translationally, phosphorylated by MAPKAPK2. In terms of processing, methylated by CARM1. Arg-493 is dimethylated, probably to asymmetric dimethylarginine.

Its subcellular location is the cytoplasm. It is found in the stress granule. The protein resides in the nucleus. The protein localises to the cell projection. It localises to the lamellipodium. Its function is as follows. Binds the poly(A) tail of mRNA, including that of its own transcript, and regulates processes of mRNA metabolism such as pre-mRNA splicing and mRNA stability. Its function in translational initiation regulation can either be enhanced by PAIP1 or repressed by PAIP2. Can probably bind to cytoplasmic RNA sequences other than poly(A) in vivo. Binds to N6-methyladenosine (m6A)-containing mRNAs and contributes to MYC stability by binding to m6A-containing MYC mRNAs. Involved in translationally coupled mRNA turnover. Implicated with other RNA-binding proteins in the cytoplasmic deadenylation/translational and decay interplay of the FOS mRNA mediated by the major coding-region determinant of instability (mCRD) domain. Involved in regulation of nonsense-mediated decay (NMD) of mRNAs containing premature stop codons; for the recognition of premature termination codons (PTC) and initiation of NMD a competitive interaction between UPF1 and PABPC1 with the ribosome-bound release factors is proposed. By binding to long poly(A) tails, may protect them from uridylation by ZCCHC6/ZCCHC11 and hence contribute to mRNA stability. The protein is Polyadenylate-binding protein 1 (Pabpc1) of Rattus norvegicus (Rat).